We begin with the raw amino-acid sequence, 293 residues long: Movement protein BC1 (293 aa).

This sequence belongs to the begomovirus movement protein BC1 family. In terms of assembly, binds to dimeric supercoiled plasmid DNA. Post-translationally, phosphorylated.

It is found in the host cell membrane. The protein resides in the host microsome membrane. It localises to the host endoplasmic reticulum membrane. In terms of biological role, transports viral genome to neighboring plant cells directly through plasmosdesmata, without any budding. The movement protein allows efficient cell to cell propagation, by bypassing the host cell wall barrier. Begomovirus genome is shuttled out of nucleus by Nuclear shuttle protein (NSP) and the movement protein transports the DNA-NSP complex to cell plasmodesmata and facilitates further movement across the cell wall. The protein is Movement protein BC1 of Macroptilium lathyroides (Lima bean).